Here is a 270-residue protein sequence, read N- to C-terminus: Gap junction beta-3 protein (270 aa).

Residues 1–20 are Cytoplasmic-facing; sequence MDWKKLQDLLSGVNQYSTAF. Residues 21-40 form a helical membrane-spanning segment; the sequence is GRIWLSVVFVFRVLVYVVAA. Residues 41–75 are Extracellular-facing; it reads ERVWGDEQKDFDCNTRQPGCTNVCYDNFFPISNIR. The chain crosses the membrane as a helical span at residues 76-98; the sequence is LWALQLIFVTCPSMLVILHVAYR. The Cytoplasmic segment spans residues 99–126; the sequence is EERERKHRQKHGEHCAKLYSHPGKKHGG. The chain crosses the membrane as a helical span at residues 127 to 149; it reads LWWTYLFSLIFKLIIELVFLYVL. The Extracellular segment spans residues 150–188; sequence HTLWHGFTMPRLVQCASVVPCPNTVDCYIARPTEKKVFT. The chain crosses the membrane as a helical span at residues 189-211; it reads YFMVGASAVCIILTICEICYLIF. Over 212-270 the chain is Cytoplasmic; it reads HRIMRGLSKDKSTKSISSPKSSSRASTCRCHHKLLESGDLEAVPADDKLQASAPSLTPI.

The protein belongs to the connexin family. Beta-type (group I) subfamily. In terms of assembly, a connexon is composed of a hexamer of connexins. Interacts with CNST.

It localises to the cell membrane. Its subcellular location is the cell junction. The protein resides in the gap junction. One gap junction consists of a cluster of closely packed pairs of transmembrane channels, the connexons, through which materials of low MW diffuse from one cell to a neighboring cell. This is Gap junction beta-3 protein (Gjb3) from Rattus norvegicus (Rat).